The following is a 302-amino-acid chain: Urease accessory protein UreD 1 (302 aa).

The protein belongs to the UreD family. As to quaternary structure, ureD, UreF and UreG form a complex that acts as a GTP-hydrolysis-dependent molecular chaperone, activating the urease apoprotein by helping to assemble the nickel containing metallocenter of UreC. The UreE protein probably delivers the nickel.

Its subcellular location is the cytoplasm. Required for maturation of urease via the functional incorporation of the urease nickel metallocenter. This is Urease accessory protein UreD 1 from Psychrobacter cryohalolentis (strain ATCC BAA-1226 / DSM 17306 / VKM B-2378 / K5).